A 380-amino-acid polypeptide reads, in one-letter code: S-phase entry cyclin-6 (380 aa).

The tract at residues 63 to 91 (PRGKLQRDSTHLEKTRKRQLSNDSTDPIE) is disordered.

The protein belongs to the cyclin family. Cyclin AB subfamily.

Functionally, involved in G1/S and or S phase progression. Interacts with CDC28. This chain is S-phase entry cyclin-6 (CLB6), found in Saccharomyces cerevisiae (strain ATCC 204508 / S288c) (Baker's yeast).